We begin with the raw amino-acid sequence, 262 residues long: uncharacterized protein (262 aa).

The protein belongs to the glycosyltransferase 2 family.

This is an uncharacterized protein from Mycobacterium tuberculosis (strain CDC 1551 / Oshkosh).